The primary structure comprises 89 residues: Small ribosomal subunit protein uS14A (89 aa).

It belongs to the universal ribosomal protein uS14 family. In terms of assembly, part of the 30S ribosomal subunit. Contacts proteins S3 and S10.

Binds 16S rRNA, required for the assembly of 30S particles and may also be responsible for determining the conformation of the 16S rRNA at the A site. The polypeptide is Small ribosomal subunit protein uS14A (Ligilactobacillus salivarius (strain UCC118) (Lactobacillus salivarius)).